A 344-amino-acid polypeptide reads, in one-letter code: Cell division protein ZipA (344 aa).

Over 1–6 (MEDLQL) the chain is Periplasmic. Residues 7 to 27 (VLFVLGAIAIVAVLVHGFWSI) traverse the membrane as a helical segment. Topologically, residues 28-344 (RRQQPKSLKD…DYLHRIRANA (317 aa)) are cytoplasmic. Disordered regions lie at residues 75–94 (VRKA…PYLK) and 108–139 (QFKQ…ASRQ).

This sequence belongs to the ZipA family. As to quaternary structure, interacts with FtsZ via their C-terminal domains.

It localises to the cell inner membrane. In terms of biological role, essential cell division protein that stabilizes the FtsZ protofilaments by cross-linking them and that serves as a cytoplasmic membrane anchor for the Z ring. Also required for the recruitment to the septal ring of downstream cell division proteins. This Shewanella oneidensis (strain ATCC 700550 / JCM 31522 / CIP 106686 / LMG 19005 / NCIMB 14063 / MR-1) protein is Cell division protein ZipA.